We begin with the raw amino-acid sequence, 484 residues long: Glycogen synthase (484 aa).

K20 contacts ADP-alpha-D-glucose.

This sequence belongs to the glycosyltransferase 1 family. Bacterial/plant glycogen synthase subfamily.

It carries out the reaction [(1-&gt;4)-alpha-D-glucosyl](n) + ADP-alpha-D-glucose = [(1-&gt;4)-alpha-D-glucosyl](n+1) + ADP + H(+). The protein operates within glycan biosynthesis; glycogen biosynthesis. Its function is as follows. Synthesizes alpha-1,4-glucan chains using ADP-glucose. The protein is Glycogen synthase of Vibrio atlanticus (strain LGP32) (Vibrio splendidus (strain Mel32)).